A 205-amino-acid chain; its full sequence is MSAFITFEGPEGSGKTTVINKVYHRLVKDYDVIMTREPGGVPTGEEIRKIVLEGNDMDIRTEAMLFAASRREHLVLKVIPALKEGKVVLCDRYIDSSLAYQGYARGIGVEEVRALNEFAINGLYPDLTIYLNVSAEVGRERIIKNSRDQNRLDQEDLKFHEKVIEGYQEIIHNESQRFKSVNADQPLENVVEDTYQTIIKYLEKI.

An ATP-binding site is contributed by 9-16 (GPEGSGKT).

Belongs to the thymidylate kinase family.

It catalyses the reaction dTMP + ATP = dTDP + ADP. Phosphorylation of dTMP to form dTDP in both de novo and salvage pathways of dTTP synthesis. The polypeptide is Thymidylate kinase (Staphylococcus aureus (strain MSSA476)).